The sequence spans 522 residues: Maturase K (522 aa).

This sequence belongs to the intron maturase 2 family. MatK subfamily.

The protein resides in the plastid. It is found in the chloroplast. In terms of biological role, usually encoded in the trnK tRNA gene intron. Probably assists in splicing its own and other chloroplast group II introns. This Schizorhiza neglecta (Lapeirousia neglecta) protein is Maturase K.